The chain runs to 65 residues: Conotoxin Cal16.1 (65 aa).

The signal sequence occupies residues 1–19; that stretch reads MRCLSIFVLLVLLVSFAVA. Positions 20-48 are excised as a propeptide; it reads ELDVEGEIVKQLLTRGTLKDADFWKRLEM. Gln-49 carries the pyrrolidone carboxylic acid modification. 2 disulfide bridges follow: Cys-51/Cys-60 and Cys-53/Cys-61. Glu-63 bears the Glutamic acid 1-amide mark.

As to expression, expressed by the venom duct.

It localises to the secreted. In terms of biological role, probable neurotoxin with unknown target. Possibly targets ion channels. The sequence is that of Conotoxin Cal16.1 from Californiconus californicus (California cone).